We begin with the raw amino-acid sequence, 718 residues long: Phenylalanine--tRNA ligase beta subunit (718 aa).

One can recognise a tRNA-binding domain in the interval 39–153 (LNEISGIKFG…IFDLESNPLK (115 aa)). The 75-residue stretch at 386–460 (SKKTFLDLNY…RFYGLEKLKD (75 aa)) folds into the B5 domain. Residues D438, D444, and D448 each coordinate Mg(2+).

The protein belongs to the phenylalanyl-tRNA synthetase beta subunit family. Type 1 subfamily. Tetramer of two alpha and two beta subunits. Mg(2+) is required as a cofactor.

The protein localises to the cytoplasm. It catalyses the reaction tRNA(Phe) + L-phenylalanine + ATP = L-phenylalanyl-tRNA(Phe) + AMP + diphosphate + H(+). This chain is Phenylalanine--tRNA ligase beta subunit, found in Mesomycoplasma hyopneumoniae (strain J / ATCC 25934 / NCTC 10110) (Mycoplasma hyopneumoniae).